A 665-amino-acid polypeptide reads, in one-letter code: Succinate dehydrogenase [ubiquinone] flavoprotein subunit A, mitochondrial (665 aa).

The transit peptide at Met-1 to Asp-45 directs the protein to the mitochondrion. Residues Ala-72, Ala-75, Thr-94, Lys-95, and Ser-101 each contribute to the FAD site. A Tele-8alpha-FAD histidine modification is found at His-102. Residues Thr-103, Gly-108, Ala-224, and Asp-278 each contribute to the FAD site. Oxaloacetate contacts are provided by His-299, Arg-343, and His-410. Arg-343 serves as the catalytic Proton acceptor. Residue Glu-443 coordinates FAD. Positions 454 and 457 each coordinate oxaloacetate. Residues Ser-459 and Leu-460 each contribute to the FAD site.

This sequence belongs to the FAD-dependent oxidoreductase 2 family. FRD/SDH subfamily. As to quaternary structure, component of complex II composed of four subunits: a flavoprotein (FP), an iron-sulfur protein (IP), and a cytochrome b composed of a large and a small subunit. It depends on FAD as a cofactor.

It localises to the mitochondrion inner membrane. The catalysed reaction is a ubiquinone + succinate = a ubiquinol + fumarate. It catalyses the reaction (R)-malate + a quinone = enol-oxaloacetate + a quinol. The enzyme catalyses (S)-malate + a quinone = enol-oxaloacetate + a quinol. It functions in the pathway carbohydrate metabolism; tricarboxylic acid cycle; fumarate from succinate (eukaryal route): step 1/1. With respect to regulation, enol-oxaloacetate inhibits the succinate dehydrogenase activity. Its function is as follows. Flavoprotein (FP) subunit of succinate dehydrogenase (SDH) that is involved in complex II of the mitochondrial electron transport chain and is responsible for transferring electrons from succinate to ubiquinone (coenzyme Q). SDH also oxidizes malate to the non-canonical enol form of oxaloacetate, enol-oxaloacetate. Enol-oxaloacetate, which is a potent inhibitor of the succinate dehydrogenase activity, is further isomerized into keto-oxaloacetate. This chain is Succinate dehydrogenase [ubiquinone] flavoprotein subunit A, mitochondrial (sdha-a), found in Xenopus laevis (African clawed frog).